Here is a 240-residue protein sequence, read N- to C-terminus: Probable transcriptional regulatory protein YrbC (240 aa).

Belongs to the TACO1 family.

Its subcellular location is the cytoplasm. This is Probable transcriptional regulatory protein YrbC (yrbC) from Bacillus subtilis (strain 168).